Consider the following 197-residue polypeptide: MPKVGMQPIRRQQLIQATLTAVDQVGMGDASIALIARLAGVSNGIISHYFQDKNGLIAATMRHLMNALIQNVRERRQALTEDSPRAHLQVIIEGNFDASQVSGPAMKTWLAFWATSMHHPSLHRLQRINDHRLYSNLCCQFRRTLPLEQARNAARGLAALIDGLWLRGALSGDAFDTEQAQRIAYEYMDFQLAKSAS.

In terms of domain architecture, HTH tetR-type spans Pro-8 to Leu-68. A DNA-binding region (H-T-H motif) is located at residues Ser-31–Phe-50.

The protein operates within amine and polyamine biosynthesis; betaine biosynthesis via choline pathway [regulation]. Repressor involved in the biosynthesis of the osmoprotectant glycine betaine. It represses transcription of the choline transporter BetT and the genes of BetAB involved in the synthesis of glycine betaine. The polypeptide is HTH-type transcriptional regulator BetI (Pseudomonas syringae pv. tomato (strain ATCC BAA-871 / DC3000)).